The chain runs to 430 residues: uncharacterized protein (430 aa).

Residues 207–223 traverse the membrane as a helical segment; sequence GETYMFGSANGLQLSIY.

The protein localises to the host membrane. Its function is as follows. May play a role in phage assembly. This is an uncharacterized protein from Pseudomonas phage Pf1 (Bacteriophage Pf1).